A 263-amino-acid polypeptide reads, in one-letter code: Putative hydro-lyase Psyc_1103 (263 aa).

Belongs to the D-glutamate cyclase family.

This is Putative hydro-lyase Psyc_1103 from Psychrobacter arcticus (strain DSM 17307 / VKM B-2377 / 273-4).